The chain runs to 464 residues: Siroheme synthase (464 aa).

The precorrin-2 dehydrogenase /sirohydrochlorin ferrochelatase stretch occupies residues 1–203 (MDYLPLFHNL…GQETEAERLL (203 aa)). Residues 22-23 (EI) and 43-44 (PQ) contribute to the NAD(+) site. At S128 the chain carries Phosphoserine. Positions 216 to 464 (GEVYLVGAGP…AWFEGRQSAD (249 aa)) are uroporphyrinogen-III C-methyltransferase. An S-adenosyl-L-methionine-binding site is contributed by P225. Catalysis depends on D248, which acts as the Proton acceptor. The Proton donor role is filled by K270. S-adenosyl-L-methionine is bound by residues 301-303 (GGD), I306, 331-332 (TA), M383, and G412.

In the N-terminal section; belongs to the precorrin-2 dehydrogenase / sirohydrochlorin ferrochelatase family. The protein in the C-terminal section; belongs to the precorrin methyltransferase family.

The catalysed reaction is uroporphyrinogen III + 2 S-adenosyl-L-methionine = precorrin-2 + 2 S-adenosyl-L-homocysteine + H(+). It carries out the reaction precorrin-2 + NAD(+) = sirohydrochlorin + NADH + 2 H(+). It catalyses the reaction siroheme + 2 H(+) = sirohydrochlorin + Fe(2+). The protein operates within cofactor biosynthesis; adenosylcobalamin biosynthesis; precorrin-2 from uroporphyrinogen III: step 1/1. It functions in the pathway cofactor biosynthesis; adenosylcobalamin biosynthesis; sirohydrochlorin from precorrin-2: step 1/1. Its pathway is porphyrin-containing compound metabolism; siroheme biosynthesis; precorrin-2 from uroporphyrinogen III: step 1/1. It participates in porphyrin-containing compound metabolism; siroheme biosynthesis; siroheme from sirohydrochlorin: step 1/1. The protein operates within porphyrin-containing compound metabolism; siroheme biosynthesis; sirohydrochlorin from precorrin-2: step 1/1. Its function is as follows. Multifunctional enzyme that catalyzes the SAM-dependent methylations of uroporphyrinogen III at position C-2 and C-7 to form precorrin-2 via precorrin-1. Then it catalyzes the NAD-dependent ring dehydrogenation of precorrin-2 to yield sirohydrochlorin. Finally, it catalyzes the ferrochelation of sirohydrochlorin to yield siroheme. This is Siroheme synthase from Azotobacter vinelandii (strain DJ / ATCC BAA-1303).